Consider the following 427-residue polypeptide: 3-phosphoshikimate 1-carboxyvinyltransferase (427 aa).

3-phosphoshikimate-binding residues include lysine 20, serine 21, and arginine 25. Lysine 20 serves as a coordination point for phosphoenolpyruvate. Residues glycine 92 and arginine 120 each coordinate phosphoenolpyruvate. 4 residues coordinate 3-phosphoshikimate: serine 166, glutamine 168, aspartate 312, and lysine 339. Glutamine 168 contacts phosphoenolpyruvate. The Proton acceptor role is filled by aspartate 312. Phosphoenolpyruvate-binding residues include arginine 343 and arginine 385.

The protein belongs to the EPSP synthase family. In terms of assembly, monomer.

Its subcellular location is the cytoplasm. It catalyses the reaction 3-phosphoshikimate + phosphoenolpyruvate = 5-O-(1-carboxyvinyl)-3-phosphoshikimate + phosphate. Its pathway is metabolic intermediate biosynthesis; chorismate biosynthesis; chorismate from D-erythrose 4-phosphate and phosphoenolpyruvate: step 6/7. Catalyzes the transfer of the enolpyruvyl moiety of phosphoenolpyruvate (PEP) to the 5-hydroxyl of shikimate-3-phosphate (S3P) to produce enolpyruvyl shikimate-3-phosphate and inorganic phosphate. This chain is 3-phosphoshikimate 1-carboxyvinyltransferase, found in Streptococcus thermophilus (strain CNRZ 1066).